Reading from the N-terminus, the 299-residue chain is Taste receptor type 2 member 4 (299 aa).

The Extracellular portion of the chain corresponds to 1 to 9 (MLRLFYFSA). Residues 10-30 (VIASVILNFVGIIMNLFITVV) form a helical membrane-spanning segment. Topologically, residues 31-46 (NCKTWVKSHRISSSDR) are cytoplasmic. Residues 47–67 (ILFSLGITRFLMLGLFLVNTI) form a helical membrane-spanning segment. At 68–81 (YFVSSNMERSVYLS) the chain is on the extracellular side. A helical membrane pass occupies residues 82 to 102 (AFFVLCFMFLDSSSLWFVTLL). Residues 103 to 131 (NILYCVKITNFQHSVFLLLKRSISPKIPR) lie on the Cytoplasmic side of the membrane. A helical transmembrane segment spans residues 132-152 (LLLAFVLISAFTTCLYITLSQ). Topologically, residues 153-172 (ASPFPELVTTRNNTSFNISE) are extracellular. N-linked (GlcNAc...) asparagine glycans are attached at residues Asn-164, Asn-165, and Asn-169. The chain crosses the membrane as a helical span at residues 173 to 193 (GILSLVVSLVLSSSLQFIINV). Residues 194–230 (TSASLLIHSLRRHIQKMQKNATGFWNPQMEAHVGAMK) lie on the Cytoplasmic side of the membrane. A helical transmembrane segment spans residues 231–251 (LMVYFLILYIPYSVATLVQYL). Over 252–262 (PFYAGMDMGTK) the chain is Extracellular. Residues 263–283 (SICLIFATLYSPGHSVLIIIT) form a helical membrane-spanning segment. The Cytoplasmic segment spans residues 284–299 (HPKLKTTAKKILCFKK).

Belongs to the G-protein coupled receptor T2R family.

The protein localises to the membrane. The protein resides in the cell projection. Its subcellular location is the cilium membrane. Functionally, gustducin-coupled receptor implicated in the perception of bitter compounds in the oral cavity and the gastrointestinal tract. Signals through PLCB2 and the calcium-regulated cation channel TRPM5. In airway epithelial cells, binding of denatonium increases the intracellular calcium ion concentration and stimulates ciliary beat frequency. This Gorilla gorilla gorilla (Western lowland gorilla) protein is Taste receptor type 2 member 4 (TAS2R4).